Consider the following 192-residue polypeptide: Orotate phosphoribosyltransferase (192 aa).

A 5-phospho-alpha-D-ribose 1-diphosphate-binding site is contributed by 116–124 (EDIVTTGLS). Residues T120 and R148 each coordinate orotate.

The protein belongs to the purine/pyrimidine phosphoribosyltransferase family. PyrE subfamily. In terms of assembly, homodimer. It depends on Mg(2+) as a cofactor.

It carries out the reaction orotidine 5'-phosphate + diphosphate = orotate + 5-phospho-alpha-D-ribose 1-diphosphate. Its pathway is pyrimidine metabolism; UMP biosynthesis via de novo pathway; UMP from orotate: step 1/2. Functionally, catalyzes the transfer of a ribosyl phosphate group from 5-phosphoribose 1-diphosphate to orotate, leading to the formation of orotidine monophosphate (OMP). This is Orotate phosphoribosyltransferase from Bartonella quintana (strain Toulouse) (Rochalimaea quintana).